A 512-amino-acid chain; its full sequence is Delta(14)-sterol reductase (512 aa).

A run of 8 helical transmembrane segments spans residues isoleucine 27 to cysteine 47, alanine 100 to alanine 120, alanine 140 to proline 160, tyrosine 172 to leucine 192, serine 242 to alanine 262, tryptophan 278 to serine 298, phenylalanine 324 to alanine 344, and alanine 353 to phenylalanine 373. Residues lysine 380, arginine 384, leucine 407, tryptophan 412, and asparagine 419–tyrosine 420 each bind NADP(+). Helical transmembrane passes span isoleucine 418–glycine 438 and methionine 458–isoleucine 478. Residues aspartate 484, cysteine 488 to tyrosine 492, and tyrosine 499 contribute to the NADP(+) site.

The protein belongs to the ERG4/ERG24 family.

It localises to the membrane. The enzyme catalyses 4,4-dimethyl-5alpha-cholesta-8,24-dien-3beta-ol + NADP(+) = 4,4-dimethyl-5alpha-cholesta-8,14,24-trien-3beta-ol + NADPH + H(+). It functions in the pathway steroid biosynthesis; zymosterol biosynthesis; zymosterol from lanosterol: step 2/6. Reduces the C14=C15 double bond of 4,4-dimethyl-cholesta-8,14,24-trienol to produce 4,4-dimethyl-cholesta-8,24-dienol. The protein is Delta(14)-sterol reductase (ERG3) of Septoria lycopersici (Tomato leaf spot fungus).